An 803-amino-acid polypeptide reads, in one-letter code: Translation initiation factor IF-2 (803 aa).

Disordered stretches follow at residues 95 to 125 (PVVE…EKAE) and 138 to 178 (EVKE…EREE). Polar residues predominate over residues 111 to 121 (VPLTSDTTNLN). Residues 138–155 (EVKEEAKKTPSEKKETPK) are compositionally biased toward basic and acidic residues. Residues 156–167 (KGPRKETRRSRK) show a composition bias toward basic residues. The span at 168–178 (PDKEDKWEREE) shows a compositional bias: basic and acidic residues. Residues 302–471 (PRAPVVTIMG…LLQAEVLELK (170 aa)) form the tr-type G domain. The interval 311-318 (GHVDHGKT) is G1. 311–318 (GHVDHGKT) contacts GTP. The G2 stretch occupies residues 336–340 (GITQH). Residues 357–360 (DTPG) form a G3 region. GTP-binding positions include 357-361 (DTPGH) and 411-414 (NKID). The G4 stretch occupies residues 411 to 414 (NKID). The tract at residues 447–449 (SAK) is G5.

Belongs to the TRAFAC class translation factor GTPase superfamily. Classic translation factor GTPase family. IF-2 subfamily.

It is found in the cytoplasm. Functionally, one of the essential components for the initiation of protein synthesis. Protects formylmethionyl-tRNA from spontaneous hydrolysis and promotes its binding to the 30S ribosomal subunits. Also involved in the hydrolysis of GTP during the formation of the 70S ribosomal complex. In Coxiella burnetii (strain CbuK_Q154) (Coxiella burnetii (strain Q154)), this protein is Translation initiation factor IF-2.